Reading from the N-terminus, the 805-residue chain is Probable inorganic carbon transporter subunit DabA (805 aa).

Positions 334, 336, 491, and 506 each coordinate Zn(2+).

This sequence belongs to the inorganic carbon transporter (TC 9.A.2) DabA family. Forms a complex with DabB. Zn(2+) serves as cofactor.

It is found in the cell inner membrane. Its function is as follows. Part of an energy-coupled inorganic carbon pump. The protein is Probable inorganic carbon transporter subunit DabA of Ruegeria sp. (strain TM1040) (Silicibacter sp.).